The primary structure comprises 218 residues: Octanoyltransferase (218 aa).

Positions 31 to 206 (EETPDEVWLV…ELVNLLGYEQ (176 aa)) constitute a BPL/LPL catalytic domain. Residues 70-77 (RGGQVTYH), 137-139 (SLG), and 150-152 (GLA) each bind substrate. The Acyl-thioester intermediate role is filled by C168.

This sequence belongs to the LipB family.

Its subcellular location is the cytoplasm. It catalyses the reaction octanoyl-[ACP] + L-lysyl-[protein] = N(6)-octanoyl-L-lysyl-[protein] + holo-[ACP] + H(+). The protein operates within protein modification; protein lipoylation via endogenous pathway; protein N(6)-(lipoyl)lysine from octanoyl-[acyl-carrier-protein]: step 1/2. Functionally, catalyzes the transfer of endogenously produced octanoic acid from octanoyl-acyl-carrier-protein onto the lipoyl domains of lipoate-dependent enzymes. Lipoyl-ACP can also act as a substrate although octanoyl-ACP is likely to be the physiological substrate. The chain is Octanoyltransferase from Vibrio vulnificus (strain YJ016).